Here is a 385-residue protein sequence, read N- to C-terminus: Muconate cycloisomerase 1-2 (385 aa).

Lys171 is an active-site residue. Glu226 and Asp251 together coordinate Mn(2+).

The protein belongs to the mandelate racemase/muconate lactonizing enzyme family. As to quaternary structure, homooctamer. Requires Mn(2+) as cofactor.

The enzyme catalyses (S)-muconolactone = cis,cis-muconate + H(+). It functions in the pathway aromatic compound metabolism; beta-ketoadipate pathway; 5-oxo-4,5-dihydro-2-furylacetate from catechol: step 2/3. Catalyzes a syn cycloisomerization. The polypeptide is Muconate cycloisomerase 1-2 (catB2) (Acinetobacter lwoffii).